The sequence spans 687 residues: Immune inhibitor A (687 aa).

Basic and acidic residues predominate over residues 1–12 (MKDAKADTKEKL). The segment at residues 1–25 (MKDAKADTKEKLNQPATGTPAATGP) is a signal peptide (or 32). The segment at 1–43 (MKDAKADTKEKLNQPATGTPAATGPVKGGLNGKVPTSPAKQKA) is disordered. The propeptide occupies 26–40 (VKGGLNGKVPTSPAK). Histidine 266 is a Zn(2+) binding site. Residue glutamate 267 is part of the active site. Histidine 270 is a binding site for Zn(2+).

This sequence belongs to the peptidase M6 family. Zn(2+) is required as a cofactor. It depends on Ca(2+) as a cofactor.

It localises to the secreted. Its function is as follows. Neutral metalloprotease that is secreted to degrade antibacterial proteins produced by the insect host for its defense (attacins and cecropins). Probably degrades some unknown crucial protein(s) too, since it is toxic when injected to insect larvae. The sequence is that of Immune inhibitor A (ina) from Bacillus thuringiensis subsp. alesti.